A 280-amino-acid polypeptide reads, in one-letter code: 2-dehydro-3-deoxyphosphooctonate aldolase (280 aa).

This sequence belongs to the KdsA family.

It localises to the cytoplasm. It catalyses the reaction D-arabinose 5-phosphate + phosphoenolpyruvate + H2O = 3-deoxy-alpha-D-manno-2-octulosonate-8-phosphate + phosphate. Its pathway is carbohydrate biosynthesis; 3-deoxy-D-manno-octulosonate biosynthesis; 3-deoxy-D-manno-octulosonate from D-ribulose 5-phosphate: step 2/3. It functions in the pathway bacterial outer membrane biogenesis; lipopolysaccharide biosynthesis. This chain is 2-dehydro-3-deoxyphosphooctonate aldolase, found in Neisseria meningitidis serogroup A / serotype 4A (strain DSM 15465 / Z2491).